Reading from the N-terminus, the 140-residue chain is Cystatin-like 1 (140 aa).

A signal peptide spans 1–23; that stretch reads MEMKARGLRIPLLLLLVTVVVMA. Residues 32 to 126 enclose the Cystatin domain; the sequence is GGFKEKAMSK…CKSLIYSVPW (95 aa). Asparagine 45 is a glycosylation site (N-linked (GlcNAc...) asparagine). Disulfide bonds link cysteine 94-cysteine 104 and cysteine 117-cysteine 137.

This sequence belongs to the cystatin family. Highly expressed in testis where it localizes to spermatogonium, spermatocyes and round spermatids. Not detected in spermatozoa. Also detected in epididymis, cerebrum and pituitary.

It is found in the secreted. The protein is Cystatin-like 1 of Mus musculus (Mouse).